The chain runs to 194 residues: Pyridoxal 5'-phosphate synthase subunit PdxT (194 aa).

L-glutamine is bound at residue 54–56 (GES). The Nucleophile role is filled by Cys83. Residues Arg110 and 139 to 140 (IR) each bind L-glutamine. Residues His175 and Glu177 each act as charge relay system in the active site.

This sequence belongs to the glutaminase PdxT/SNO family. In terms of assembly, in the presence of PdxS, forms a dodecamer of heterodimers. Only shows activity in the heterodimer.

The enzyme catalyses aldehydo-D-ribose 5-phosphate + D-glyceraldehyde 3-phosphate + L-glutamine = pyridoxal 5'-phosphate + L-glutamate + phosphate + 3 H2O + H(+). It catalyses the reaction L-glutamine + H2O = L-glutamate + NH4(+). It participates in cofactor biosynthesis; pyridoxal 5'-phosphate biosynthesis. In terms of biological role, catalyzes the hydrolysis of glutamine to glutamate and ammonia as part of the biosynthesis of pyridoxal 5'-phosphate. The resulting ammonia molecule is channeled to the active site of PdxS. This chain is Pyridoxal 5'-phosphate synthase subunit PdxT, found in Methanoregula boonei (strain DSM 21154 / JCM 14090 / 6A8).